Reading from the N-terminus, the 50-residue chain is Large ribosomal subunit protein eL39 (50 aa).

Basic residues predominate over residues 1–12 (MGKKSKAKKKRL). The disordered stretch occupies residues 1–21 (MGKKSKAKKKRLGKLEKQNSR).

It belongs to the eukaryotic ribosomal protein eL39 family.

The protein is Large ribosomal subunit protein eL39 of Haloquadratum walsbyi (strain DSM 16790 / HBSQ001).